A 304-amino-acid polypeptide reads, in one-letter code: Non-specific ribonucleoside hydrolase RihC (304 aa).

Histidine 235 is an active-site residue.

This sequence belongs to the IUNH family. RihC subfamily.

Its function is as follows. Hydrolyzes both purine and pyrimidine ribonucleosides with a broad-substrate specificity. This Salmonella paratyphi A (strain ATCC 9150 / SARB42) protein is Non-specific ribonucleoside hydrolase RihC.